Here is a 772-residue protein sequence, read N- to C-terminus: Phosphatidylinositol 4-phosphate 5-kinase 5 (772 aa).

The segment at 22–56 (AKKRANSVFGTVSVAPHTDNDTTTDDNDDETTTNR) is disordered. Positions 43–52 (TTTDDNDDET) are enriched in acidic residues. MORN repeat units lie at residues 75 to 97 (YTGQ…DGCM), 98 to 120 (YIGD…SGAT), 121 to 143 (YEGE…SGDA), 144 to 166 (YKGQ…NGDA), 167 to 189 (YDGE…DGSY), 190 to 212 (YIGE…NGNR), 213 to 235 (YDGF…NGSF), and 236 to 257 (YVGH…SGNE). A PIPK domain is found at 377–768 (SKGHRNYELM…RFRDFIFKVF (392 aa)). Residues 646–665 (SGARTPIGESEEESGPRLSR) are disordered. Residues 728–749 (YDISKKLEHAYKSIQYDPSSIS) are activation loop.

The catalysed reaction is a 1,2-diacyl-sn-glycero-3-phospho-(1D-myo-inositol 4-phosphate) + ATP = a 1,2-diacyl-sn-glycero-3-phospho-(1D-myo-inositol-4,5-bisphosphate) + ADP + H(+). The protein is Phosphatidylinositol 4-phosphate 5-kinase 5 (PIP5K5) of Arabidopsis thaliana (Mouse-ear cress).